Consider the following 420-residue polypeptide: Subtilisin-like protease 7 (420 aa).

The N-terminal stretch at 1–20 (MGFITKAIPLALAAASVING) is a signal peptide. Positions 21-119 (AEIMETRAGV…IERDARVQIN (99 aa)) are excised as a propeptide. The Inhibitor I9 domain maps to 36-118 (KYIVVMNDGM…YIERDARVQI (83 aa)). The region spanning 129 to 413 (SWGLARVGSK…SFPLNIYEEQ (285 aa)) is the Peptidase S8 domain. Residues Asp-161 and His-192 each act as charge relay system in the active site. N-linked (GlcNAc...) asparagine glycans are attached at residues Asn-222 and Asn-252. Ser-346 serves as the catalytic Charge relay system. N-linked (GlcNAc...) asparagine glycosylation is present at Asn-396.

Belongs to the peptidase S8 family.

It localises to the secreted. Functionally, secreted subtilisin-like serine protease with keratinolytic activity that contributes to pathogenicity. The protein is Subtilisin-like protease 7 (SUB7) of Arthroderma benhamiae (strain ATCC MYA-4681 / CBS 112371) (Trichophyton mentagrophytes).